Reading from the N-terminus, the 207-residue chain is MFTGLVEDLGKVKNLTLSSKGAKLSVETKLEDVKLGDSVSVNGACLTVVDIKSSTLTFDVSPETLKRTNLGKLKTGDYVNLERALRVGERLGGHIVQGHVDFTAPVKSFNFLGEHYELVIEIPEEWSIYVVEKGSIALDGISLTVNYVKENKVFINIIPHTYKSTNLQFKKVGDLLNVETDILGKYVINYLNKLKKKEDIFKEFLKW.

2 Lumazine-binding repeats span residues 1–94 (MFTG…LGGH) and 95–191 (IVQG…INYL). 2,4-dihydroxypteridine contacts are provided by residues 4–6 (GLV), 45–47 (CLT), 59–64 (DVSPET), 98–100 (GHV), lysine 133, 142–144 (SLT), and 156–161 (NIIPHT).

As to quaternary structure, homotrimer.

It catalyses the reaction 2 6,7-dimethyl-8-(1-D-ribityl)lumazine + H(+) = 5-amino-6-(D-ribitylamino)uracil + riboflavin. It participates in cofactor biosynthesis; riboflavin biosynthesis; riboflavin from 2-hydroxy-3-oxobutyl phosphate and 5-amino-6-(D-ribitylamino)uracil: step 2/2. Its function is as follows. Catalyzes the dismutation of two molecules of 6,7-dimethyl-8-ribityllumazine, resulting in the formation of riboflavin and 5-amino-6-(D-ribitylamino)uracil. This Aquifex aeolicus (strain VF5) protein is Riboflavin synthase (ribE).